The chain runs to 794 residues: Protein sel-1 homolog 1 (794 aa).

An N-terminal signal peptide occupies residues 1 to 21; sequence MRVRIGLTLLLCAVLLSLASA. The interval 21 to 50 is disordered; it reads ASSDEEGSQDESLDSKTTLTSDESVKDHTT. An interaction with ERLEC1, OS9 and SYVN1 region spans residues 22–737; it reads SSDEEGSQDE…DMFTQLDMDQ (716 aa). Topologically, residues 22–738 are lumenal; the sequence is SSDEEGSQDE…MFTQLDMDQL (717 aa). A compositionally biased stretch (acidic residues) spans 23–32; the sequence is SDEEGSQDES. Ser63 is modified (phosphoserine). Over residues 64-77 the composition is skewed to acidic residues; that stretch reads EESELESSIQEEED. The disordered stretch occupies residues 64–109; that stretch reads EESELESSIQEEEDSLKSQEGESVTEDISFLESPNPENKDYEEPKK. The Fibronectin type-II domain occupies 122–170; sequence AHGEPCHFPFLFLDKEYDECTSDGREDGRLWCATTYDYKADEKWGFCET. Disulfide bonds link Cys127-Cys153 and Cys141-Cys168. 9 Sel1-like repeats span residues 183 to 218, 219 to 254, 255 to 290, 291 to 326, 373 to 409, 410 to 446, 447 to 482, 483 to 518, and 519 to 554; these read AEMM…SMNH, TKAL…EEGS, PKGQ…LGGN, LIAH…NHVA, VQAQ…NAGN, SHAM…DMGN, PVGQ…EQGW, VDGQ…QGGH, and ILAF…ERGR. N-linked (GlcNAc...) asparagine glycosylation is found at Asn195 and Asn217. Asn272 carries an N-linked (GlcNAc...) asparagine glycan. The important for homodimerization and oligomerization stretch occupies residues 352 to 537; it reads NSGMLEEDLI…MHASGTGVMR (186 aa). A glycan (N-linked (GlcNAc...) asparagine) is linked at Asn431. Residue Asn608 is glycosylated (N-linked (GlcNAc...) asparagine). Sel1-like repeat units follow at residues 627–662 and 664–699; these read TVAR…EQQH and AQAM…EASP. Positions 643 to 723 are interaction with SYVN1; the sequence is TDVDYETAFI…VVYFLQYIRE (81 aa). The interval 738–794 is mediates retention in the endoplasmic reticulum; that stretch reads LLGPEWDLYLMTIIALLLGTVIAYRQRQHQDMPAPRPPGPRPAPPQQEGPPEQQPPQ. A helical transmembrane segment spans residues 739–759; the sequence is LGPEWDLYLMTIIALLLGTVI. The Cytoplasmic segment spans residues 760–794; that stretch reads AYRQRQHQDMPAPRPPGPRPAPPQQEGPPEQQPPQ. The disordered stretch occupies residues 766–794; sequence HQDMPAPRPPGPRPAPPQQEGPPEQQPPQ. Residues 771 to 794 are compositionally biased toward pro residues; the sequence is APRPPGPRPAPPQQEGPPEQQPPQ.

This sequence belongs to the sel-1 family. As to quaternary structure, homodimer and homooligomer. May form a complex with ERLEC1, HSPA5, OS9, and SYVN1. Interacts with FOXRED2 and EDEM1. Interacts with LPL. Interacts with LMF1; may stabilize the complex formed by LPL and LMF1 and thereby promote the export of LPL dimers. Component of the HRD1 complex, which comprises at least SYNV1/HRD1, DERL1/2, FAM8A1, HERPUD1/HERP, OS9, SEL1L and UBE2J1. SYNV1 assembles with SEL1L and FAM8A1 through its transmembrane domains, but interaction with its cytoplasmic domain is required to confer stability to FAM8A1 and enhance recruitment of HERPUD1. The interaction with SYNV1/HRD1 is direct. In terms of assembly, (Microbial infection) Interacts with human cytomegalovirus protein UL148. N-glycosylated. Highly expressed in pancreas.

The protein resides in the endoplasmic reticulum membrane. In terms of biological role, plays a role in the endoplasmic reticulum quality control (ERQC) system also called ER-associated degradation (ERAD) involved in ubiquitin-dependent degradation of misfolded endoplasmic reticulum proteins. Enhances SYVN1 stability. Plays a role in LPL maturation and secretion. Required for normal differentiation of the pancreas epithelium, and for normal exocrine function and survival of pancreatic cells. May play a role in Notch signaling. The polypeptide is Protein sel-1 homolog 1 (Homo sapiens (Human)).